The sequence spans 313 residues: Acetaldehyde dehydrogenase (313 aa).

Ser15 to Ile18 is a binding site for NAD(+). Cys133 acts as the Acyl-thioester intermediate in catalysis. Residues Ser164–Asn172 and Asn289 contribute to the NAD(+) site.

The protein belongs to the acetaldehyde dehydrogenase family.

The catalysed reaction is acetaldehyde + NAD(+) + CoA = acetyl-CoA + NADH + H(+). The protein is Acetaldehyde dehydrogenase of Rhizobium rhizogenes (strain K84 / ATCC BAA-868) (Agrobacterium radiobacter).